A 663-amino-acid polypeptide reads, in one-letter code: Transketolase 2 (663 aa).

A substrate-binding site is contributed by histidine 25. Thiamine diphosphate contacts are provided by residues histidine 65 and 113–115; that span reads GPL. Aspartate 154 serves as a coordination point for Mg(2+). Glycine 155 and asparagine 184 together coordinate thiamine diphosphate. Mg(2+)-binding residues include asparagine 184 and isoleucine 186. Positions 259, 356, and 383 each coordinate substrate. Histidine 259 serves as a coordination point for thiamine diphosphate. Catalysis depends on glutamate 410, which acts as the Proton donor. Residue phenylalanine 436 participates in thiamine diphosphate binding. Substrate is bound by residues histidine 460, aspartate 468, and arginine 519.

It belongs to the transketolase family. As to quaternary structure, homodimer. Mg(2+) serves as cofactor. The cofactor is Ca(2+). It depends on Mn(2+) as a cofactor. Requires Co(2+) as cofactor. Thiamine diphosphate is required as a cofactor.

The enzyme catalyses D-sedoheptulose 7-phosphate + D-glyceraldehyde 3-phosphate = aldehydo-D-ribose 5-phosphate + D-xylulose 5-phosphate. Catalyzes the transfer of a two-carbon ketol group from a ketose donor to an aldose acceptor, via a covalent intermediate with the cofactor thiamine pyrophosphate. This is Transketolase 2 (tkt2) from Vibrio parahaemolyticus serotype O3:K6 (strain RIMD 2210633).